The chain runs to 120 residues: Putative B3 domain-containing protein At3g28853 (120 aa).

Positions 19–120 form a DNA-binding region, TF-B3; that stretch reads INKRLTQSDV…DKSNEVFYII (102 aa).

The protein localises to the nucleus. The chain is Putative B3 domain-containing protein At3g28853 from Arabidopsis thaliana (Mouse-ear cress).